Reading from the N-terminus, the 183-residue chain is Apo-citrate lyase phosphoribosyl-dephospho-CoA transferase (183 aa).

It belongs to the CitX family.

It catalyses the reaction apo-[citrate lyase ACP] + 2'-(5''-triphospho-alpha-D-ribosyl)-3'-dephospho-CoA = holo-[citrate lyase ACP] + diphosphate. Its function is as follows. Transfers 2-(5''-triphosphoribosyl)-3'-dephosphocoenzyme-A on a serine residue to the apo-acyl carrier protein (gamma chain) of the citrate lyase to yield holo-acyl carrier protein. This is Apo-citrate lyase phosphoribosyl-dephospho-CoA transferase from Escherichia coli O6:K15:H31 (strain 536 / UPEC).